The sequence spans 259 residues: Pimeloyl-[acyl-carrier protein] methyl ester esterase (259 aa).

Residues tryptophan 18, serine 78–leucine 79, and phenylalanine 139–aspartate 143 contribute to the substrate site. Serine 78 functions as the Nucleophile in the catalytic mechanism. Catalysis depends on residues aspartate 203 and histidine 231. Histidine 231 contacts substrate.

It belongs to the AB hydrolase superfamily. Carboxylesterase BioH family. Monomer.

The protein resides in the cytoplasm. It catalyses the reaction 6-carboxyhexanoyl-[ACP] methyl ester + H2O = 6-carboxyhexanoyl-[ACP] + methanol + H(+). It participates in cofactor biosynthesis; biotin biosynthesis. Its function is as follows. The physiological role of BioH is to remove the methyl group introduced by BioC when the pimeloyl moiety is complete. It allows to synthesize pimeloyl-ACP via the fatty acid synthetic pathway through the hydrolysis of the ester bonds of pimeloyl-ACP esters. In Stenotrophomonas maltophilia (strain K279a), this protein is Pimeloyl-[acyl-carrier protein] methyl ester esterase.